A 1039-amino-acid polypeptide reads, in one-letter code: Antigenic heat-stable 120 kDa protein (1039 aa).

Disordered stretches follow at residues 1 to 115 (MSKD…TSDP), 408 to 438 (SSIETPTTTQVPPITPANQPLQPETSQMPQP), and 1020 to 1039 (QSENLNKSTPIKRESSFPPR). Polar residues predominate over residues 31–44 (PISSTANKDGNPDT). Residues 54–69 (EYTEEQKQKLEQEQKE) are compositionally biased toward basic and acidic residues. Low complexity predominate over residues 85 to 114 (FSFTPASSTQSTPSISSLSGGISSDSQTSD). A compositionally biased stretch (polar residues) spans 424–438 (ANQPLQPETSQMPQP). The segment covering 1030–1039 (IKRESSFPPR) has biased composition (basic and acidic residues).

It is found in the cytoplasm. This chain is Antigenic heat-stable 120 kDa protein (sca4), found in Rickettsia felis (strain ATCC VR-1525 / URRWXCal2) (Rickettsia azadi).